The following is a 491-amino-acid chain: Cobyric acid synthase (491 aa).

Residues 253 to 429 (ARRVAVIRLP…WHGALEGDEL (177 aa)) enclose the GATase cobBQ-type domain. Catalysis depends on Cys334, which acts as the Nucleophile. His421 is a catalytic residue.

This sequence belongs to the CobB/CobQ family. CobQ subfamily.

Its pathway is cofactor biosynthesis; adenosylcobalamin biosynthesis. Its function is as follows. Catalyzes amidations at positions B, D, E, and G on adenosylcobyrinic A,C-diamide. NH(2) groups are provided by glutamine, and one molecule of ATP is hydrogenolyzed for each amidation. The sequence is that of Cobyric acid synthase from Mycolicibacterium gilvum (strain PYR-GCK) (Mycobacterium gilvum (strain PYR-GCK)).